The primary structure comprises 124 residues: Large ribosomal subunit protein bL12 (124 aa).

It belongs to the bacterial ribosomal protein bL12 family. In terms of assembly, homodimer. Part of the ribosomal stalk of the 50S ribosomal subunit. Forms a multimeric L10(L12)X complex, where L10 forms an elongated spine to which 2 to 4 L12 dimers bind in a sequential fashion. Binds GTP-bound translation factors.

Forms part of the ribosomal stalk which helps the ribosome interact with GTP-bound translation factors. Is thus essential for accurate translation. This Allorhizobium ampelinum (strain ATCC BAA-846 / DSM 112012 / S4) (Agrobacterium vitis (strain S4)) protein is Large ribosomal subunit protein bL12.